The following is a 376-amino-acid chain: Succinyl-diaminopimelate desuccinylase (376 aa).

Position 74 (His74) interacts with Zn(2+). Asp76 is an active-site residue. Residue Asp105 coordinates Zn(2+). Glu135 acts as the Proton acceptor in catalysis. Positions 136, 164, and 349 each coordinate Zn(2+).

Belongs to the peptidase M20A family. DapE subfamily. In terms of assembly, homodimer. Requires Zn(2+) as cofactor. It depends on Co(2+) as a cofactor.

It catalyses the reaction N-succinyl-(2S,6S)-2,6-diaminopimelate + H2O = (2S,6S)-2,6-diaminopimelate + succinate. The protein operates within amino-acid biosynthesis; L-lysine biosynthesis via DAP pathway; LL-2,6-diaminopimelate from (S)-tetrahydrodipicolinate (succinylase route): step 3/3. Its function is as follows. Catalyzes the hydrolysis of N-succinyl-L,L-diaminopimelic acid (SDAP), forming succinate and LL-2,6-diaminopimelate (DAP), an intermediate involved in the bacterial biosynthesis of lysine and meso-diaminopimelic acid, an essential component of bacterial cell walls. This chain is Succinyl-diaminopimelate desuccinylase, found in Zymomonas mobilis subsp. mobilis (strain ATCC 31821 / ZM4 / CP4).